A 700-amino-acid polypeptide reads, in one-letter code: Elongation factor G (700 aa).

The tr-type G domain maps to 10–285; sequence DRTRNIGIMA…AVIDYLPSPL (276 aa). GTP-binding positions include 19–26, 83–87, and 137–140; these read AHIDAGKT, DTPGH, and NKMD.

This sequence belongs to the TRAFAC class translation factor GTPase superfamily. Classic translation factor GTPase family. EF-G/EF-2 subfamily.

The protein resides in the cytoplasm. Catalyzes the GTP-dependent ribosomal translocation step during translation elongation. During this step, the ribosome changes from the pre-translocational (PRE) to the post-translocational (POST) state as the newly formed A-site-bound peptidyl-tRNA and P-site-bound deacylated tRNA move to the P and E sites, respectively. Catalyzes the coordinated movement of the two tRNA molecules, the mRNA and conformational changes in the ribosome. The sequence is that of Elongation factor G from Lacticaseibacillus casei (strain BL23) (Lactobacillus casei).